Here is a 205-residue protein sequence, read N- to C-terminus: MDIMKDKIRQALSELDILATEVQIDQWLDYLKLLEKWNKVYNMTAIKNIDEMLVKHLFDSLAVAKYIKGDSTVDVGTGGGLPGVVLAILYPQHQFTLVDSVGKKIMFLKNVKKSLSLNNINPLNTRIENLEGNFDNIISRAFSSVDTFYELCKHFLTEHNQMLAMKGRDLEERNLESLPLNIEKYSIKVPFLNAERNLIVMRKKL.

S-adenosyl-L-methionine is bound by residues Gly76, Leu81, 127 to 128, and Arg140; that span reads IE.

The protein belongs to the methyltransferase superfamily. RNA methyltransferase RsmG family.

It is found in the cytoplasm. It catalyses the reaction guanosine(527) in 16S rRNA + S-adenosyl-L-methionine = N(7)-methylguanosine(527) in 16S rRNA + S-adenosyl-L-homocysteine. In terms of biological role, specifically methylates the N7 position of guanine in position 527 of 16S rRNA. The protein is Ribosomal RNA small subunit methyltransferase G of Francisella tularensis subsp. holarctica (strain FTNF002-00 / FTA).